The following is a 184-amino-acid chain: UPF0398 protein BCB4264_A1614 (184 aa).

It belongs to the UPF0398 family.

The protein is UPF0398 protein BCB4264_A1614 of Bacillus cereus (strain B4264).